Consider the following 412-residue polypeptide: BSD domain-containing protein 1 (412 aa).

In terms of domain architecture, BSD spans 145–197; the sequence is WLSTFSLEERKAEISELLVSSPAIRALYTKMVPAAVAHAEFWQRYFYKVFQLE. The segment covering 208-217 has biased composition (basic and acidic residues); the sequence is QRAEQTDHSE. 3 disordered regions span residues 208–227, 253–272, and 298–412; these read QRAE…EDEE, VTVA…ASLS, and ESVT…ENWE. Composition is skewed to polar residues over residues 259–272 and 298–308; these read PESS…ASLS and ESVTIRVTQPS. Ser-308 bears the Phosphoserine mark. The segment covering 328-349 has biased composition (basic and acidic residues); that stretch reads PEERPAPREETAREDMAQDLRV. Residues 353 to 372 are compositionally biased toward polar residues; the sequence is NSDSGKSTPSNNGKKGSSTD. Acidic residues-rich tracts occupy residues 373 to 390 and 400 to 412; these read VSED…EEEV and TEEL…ENWE.

This chain is BSD domain-containing protein 1 (bsdc1), found in Danio rerio (Zebrafish).